The sequence spans 339 residues: DNA-directed RNA polymerase subunit alpha (339 aa).

The segment at 1 to 235 (MTIQKNWQEL…DQLNVFVNFE (235 aa)) is alpha N-terminal domain (alpha-NTD). Residues 251 to 339 (FNPAFLKKVD…ELAKRFEDHY (89 aa)) are alpha C-terminal domain (alpha-CTD).

This sequence belongs to the RNA polymerase alpha chain family. As to quaternary structure, homodimer. The RNAP catalytic core consists of 2 alpha, 1 beta, 1 beta' and 1 omega subunit. When a sigma factor is associated with the core the holoenzyme is formed, which can initiate transcription.

The catalysed reaction is RNA(n) + a ribonucleoside 5'-triphosphate = RNA(n+1) + diphosphate. In terms of biological role, DNA-dependent RNA polymerase catalyzes the transcription of DNA into RNA using the four ribonucleoside triphosphates as substrates. This chain is DNA-directed RNA polymerase subunit alpha, found in Rhodopseudomonas palustris (strain ATCC BAA-98 / CGA009).